Reading from the N-terminus, the 404-residue chain is Cysteine desulfurase IscS (404 aa).

Residues 75-76, Asn-155, Gln-183, and 203-205 each bind pyridoxal 5'-phosphate; these read AT and SAH. N6-(pyridoxal phosphate)lysine is present on Lys-206. Thr-243 lines the pyridoxal 5'-phosphate pocket. Cys-328 functions as the Cysteine persulfide intermediate in the catalytic mechanism. Cys-328 is a [2Fe-2S] cluster binding site.

The protein belongs to the class-V pyridoxal-phosphate-dependent aminotransferase family. NifS/IscS subfamily. Homodimer. Forms a heterotetramer with IscU, interacts with other sulfur acceptors. The cofactor is pyridoxal 5'-phosphate.

It localises to the cytoplasm. It carries out the reaction (sulfur carrier)-H + L-cysteine = (sulfur carrier)-SH + L-alanine. The protein operates within cofactor biosynthesis; iron-sulfur cluster biosynthesis. Master enzyme that delivers sulfur to a number of partners involved in Fe-S cluster assembly, tRNA modification or cofactor biosynthesis. Catalyzes the removal of elemental sulfur atoms from cysteine to produce alanine. Functions as a sulfur delivery protein for Fe-S cluster synthesis onto IscU, an Fe-S scaffold assembly protein, as well as other S acceptor proteins. The chain is Cysteine desulfurase IscS from Vibrio cholerae serotype O1 (strain M66-2).